A 266-amino-acid chain; its full sequence is Interleukin-1 beta (266 aa).

Positions 1–113 (MATVPEPINE…ETSSDEFLCD (113 aa)) are excised as a propeptide.

It belongs to the IL-1 family. In terms of assembly, monomer. In its precursor form, weakly interacts with full-length MEFV; the mature cytokine does not interact at all. Interacts with integrins ITGAV:ITGBV and ITGA5:ITGB1; integrin-binding is required for IL1B signaling. Interacts with cargo receptor TMED10; the interaction is direct and is required for the secretion of IL1B mature form. Interacts with HSP90AB1; the interaction facilitates cargo translocation into the ERGIC. Interacts with HSP90B1; the interaction facilitates cargo translocation into the ERGIC.

It is found in the cytoplasm. Its subcellular location is the cytosol. The protein localises to the secreted. The protein resides in the lysosome. It localises to the extracellular exosome. In terms of biological role, potent pro-inflammatory cytokine. Initially discovered as the major endogenous pyrogen, induces prostaglandin synthesis, neutrophil influx and activation, T-cell activation and cytokine production, B-cell activation and antibody production, and fibroblast proliferation and collagen production. Promotes Th17 differentiation of T-cells. Synergizes with IL12/interleukin-12 to induce IFNG synthesis from T-helper 1 (Th1) cells. Plays a role in angiogenesis by inducing VEGF production synergistically with TNF and IL6. Involved in transduction of inflammation downstream of pyroptosis: its mature form is specifically released in the extracellular milieu by passing through the gasdermin-D (GSDMD) pore. This chain is Interleukin-1 beta (IL1B), found in Bubalus carabanensis (Swamp type water buffalo).